Consider the following 418-residue polypeptide: EPS I polysaccharide export inner membrane protein EpsF (418 aa).

10 helical membrane-spanning segments follow: residues 21–41, 45–65, 142–162, 170–190, 222–242, 262–282, 296–316, 326–346, 347–367, and 377–397; these read VLVVIGMLLAVPMAFPLFPIA, CAAILAILLPLGRLQHVLATA, PLMVWAILIFISLMLVWIAIY, YVVFVAYLSTITLYALQGSAI, AGTHSSAAALLLVCATVMLFL, LLVLLVLAVAAVAFGSAEFVM, SAWEFQLAVEAVLACLFAWLF, LTYFLFVLLCASTSFFAPAVG, ARLFRYTYCFYIVYLCVFFFA, and KTLASLLFLASLGWAFYIVDV.

It to S.marcescens SfuB.

The protein localises to the cell inner membrane. In terms of biological role, probably involved in polymerization and/or export of exopolysaccharide EPS I which functions as a virulence factor. May play a role in export of EPS I or its intermediates across the membranes. This chain is EPS I polysaccharide export inner membrane protein EpsF (epsF), found in Ralstonia solanacearum (Pseudomonas solanacearum).